The primary structure comprises 155 residues: 6,7-dimethyl-8-ribityllumazine synthase (155 aa).

5-amino-6-(D-ribitylamino)uracil contacts are provided by residues phenylalanine 24, 58–60, and 82–84; these read AFE and VII. 87–88 provides a ligand contact to (2S)-2-hydroxy-3-oxobutyl phosphate; it reads ST. The active-site Proton donor is histidine 90. Phenylalanine 115 contributes to the 5-amino-6-(D-ribitylamino)uracil binding site. Position 129 (arginine 129) interacts with (2S)-2-hydroxy-3-oxobutyl phosphate.

Belongs to the DMRL synthase family.

The enzyme catalyses (2S)-2-hydroxy-3-oxobutyl phosphate + 5-amino-6-(D-ribitylamino)uracil = 6,7-dimethyl-8-(1-D-ribityl)lumazine + phosphate + 2 H2O + H(+). Its pathway is cofactor biosynthesis; riboflavin biosynthesis; riboflavin from 2-hydroxy-3-oxobutyl phosphate and 5-amino-6-(D-ribitylamino)uracil: step 1/2. Functionally, catalyzes the formation of 6,7-dimethyl-8-ribityllumazine by condensation of 5-amino-6-(D-ribitylamino)uracil with 3,4-dihydroxy-2-butanone 4-phosphate. This is the penultimate step in the biosynthesis of riboflavin. The protein is 6,7-dimethyl-8-ribityllumazine synthase of Chlorobium limicola (strain DSM 245 / NBRC 103803 / 6330).